The following is a 257-amino-acid chain: uncharacterized protein (257 aa).

This sequence to yeast YKR015c.

This is an uncharacterized protein from Saccharomyces cerevisiae (strain ATCC 204508 / S288c) (Baker's yeast).